The sequence spans 339 residues: N-acetyl-gamma-glutamyl-phosphate reductase (339 aa).

The active site involves Cys145.

It belongs to the NAGSA dehydrogenase family. Type 1 subfamily.

The protein resides in the cytoplasm. The enzyme catalyses N-acetyl-L-glutamate 5-semialdehyde + phosphate + NADP(+) = N-acetyl-L-glutamyl 5-phosphate + NADPH + H(+). The protein operates within amino-acid biosynthesis; L-arginine biosynthesis; N(2)-acetyl-L-ornithine from L-glutamate: step 3/4. Its function is as follows. Catalyzes the NADPH-dependent reduction of N-acetyl-5-glutamyl phosphate to yield N-acetyl-L-glutamate 5-semialdehyde. This Kosmotoga olearia (strain ATCC BAA-1733 / DSM 21960 / TBF 19.5.1) protein is N-acetyl-gamma-glutamyl-phosphate reductase.